The chain runs to 444 residues: Phosphoglucosamine mutase (444 aa).

Residue Ser100 is the Phosphoserine intermediate of the active site. Mg(2+) contacts are provided by Ser100, Asp240, Asp242, and Asp244. The residue at position 100 (Ser100) is a Phosphoserine.

This sequence belongs to the phosphohexose mutase family. Requires Mg(2+) as cofactor. Post-translationally, activated by phosphorylation.

It carries out the reaction alpha-D-glucosamine 1-phosphate = D-glucosamine 6-phosphate. Catalyzes the conversion of glucosamine-6-phosphate to glucosamine-1-phosphate. This is Phosphoglucosamine mutase from Moorella thermoacetica (strain ATCC 39073 / JCM 9320).